Consider the following 253-residue polypeptide: MNLTDKTVLITGGASGIGYAAVQAFLGQQANVVVADIDEAQGEAMVRKENNDRLHFVQTDITDEAACQHAVESAVHTFGGLDVLINNAGIEIVAPIHEMELSDWNKVLQVNLTGMFLMSKHALKHMLAAGKGNIINTCSVGGLVAWPDIPAYNASKGGVLQLTKSMAVDYAKHQIRVNCVCPGIIDTPLNEKSFLENNEGTLEEIKKEKAKVNPLLRLGKPEEIANVMLFLASDLSSYMTGSAITADGGYTAQ.

An NAD(+)-binding site is contributed by 9 to 31; sequence LITGGASGIGYAAVQAFLGQQAN. Ser139 contacts substrate. Tyr152 (proton acceptor) is an active-site residue.

Belongs to the short-chain dehydrogenases/reductases (SDR) family.

It carries out the reaction L-dihydroanticapsin + NAD(+) = L-anticapsin + NADH + H(+). The protein operates within antibiotic biosynthesis; bacilysin biosynthesis. In terms of biological role, part of the bacABCDEFG operon responsible for the biosynthesis of bacilysin, an irreversible inactivator of the glutaminase domain of glucosamine synthetase. Catalyzes the dehydrogenation of the C7-hydroxyl group in the 4S-tetrahydrotyrosine (4S-H4Tyr) to yield anticapsin (epoxycyclohexanonyl-Ala). It is not able to oxidize the 4R-H4Tyr diastereomer and the dihydrobacilysin dipeptide (L-Ala-4S-H4Tyr dipeptide). This Bacillus subtilis (strain 168) protein is Dihydroanticapsin 7-dehydrogenase.